Reading from the N-terminus, the 109-residue chain is uncharacterized protein (109 aa).

3 helical membrane-spanning segments follow: residues 16–36, 54–74, and 80–100; these read YIPLVVLLQMYIIYVEPYYGL, TVYFLVICHSIESAIAFLLCL, and FCSSMKWIVSTFIFGGPTLAM.

The protein localises to the membrane. This is an uncharacterized protein from Schizosaccharomyces pombe (strain 972 / ATCC 24843) (Fission yeast).